The following is a 378-amino-acid chain: Succinyl-diaminopimelate desuccinylase (378 aa).

H68 provides a ligand contact to Zn(2+). D70 is a catalytic residue. D102 lines the Zn(2+) pocket. Catalysis depends on E136, which acts as the Proton acceptor. The Zn(2+) site is built by E137, E165, and H351.

It belongs to the peptidase M20A family. DapE subfamily. Homodimer. It depends on Zn(2+) as a cofactor. Requires Co(2+) as cofactor.

It carries out the reaction N-succinyl-(2S,6S)-2,6-diaminopimelate + H2O = (2S,6S)-2,6-diaminopimelate + succinate. Its pathway is amino-acid biosynthesis; L-lysine biosynthesis via DAP pathway; LL-2,6-diaminopimelate from (S)-tetrahydrodipicolinate (succinylase route): step 3/3. In terms of biological role, catalyzes the hydrolysis of N-succinyl-L,L-diaminopimelic acid (SDAP), forming succinate and LL-2,6-diaminopimelate (DAP), an intermediate involved in the bacterial biosynthesis of lysine and meso-diaminopimelic acid, an essential component of bacterial cell walls. This Pseudomonas syringae pv. syringae protein is Succinyl-diaminopimelate desuccinylase.